Reading from the N-terminus, the 649-residue chain is tRNA-guanine(15) transglycosylase (649 aa).

Asp88 serves as the catalytic Nucleophile. Substrate contacts are provided by Asp123 and Ala194. Positions 280, 282, and 285 each coordinate Zn(2+). In terms of domain architecture, PUA spans 573–648 (NYRIVIDSSV…VAATLRGGIK (76 aa)).

Belongs to the archaeosine tRNA-ribosyltransferase family. It depends on Zn(2+) as a cofactor.

The enzyme catalyses guanosine(15) in tRNA + 7-cyano-7-deazaguanine = 7-cyano-7-carbaguanosine(15) in tRNA + guanine. It participates in tRNA modification; archaeosine-tRNA biosynthesis. Exchanges the guanine residue with 7-cyano-7-deazaguanine (preQ0) at position 15 in the dihydrouridine loop (D-loop) of archaeal tRNAs. The chain is tRNA-guanine(15) transglycosylase from Methanococcus maripaludis (strain C5 / ATCC BAA-1333).